A 107-amino-acid chain; its full sequence is Small ribosomal subunit protein uS17 (107 aa).

This sequence belongs to the universal ribosomal protein uS17 family. As to quaternary structure, part of the 30S ribosomal subunit.

Its function is as follows. One of the primary rRNA binding proteins, it binds specifically to the 5'-end of 16S ribosomal RNA. The sequence is that of Small ribosomal subunit protein uS17 from Thermotoga sp. (strain RQ2).